We begin with the raw amino-acid sequence, 474 residues long: tRNA-2-methylthio-N(6)-dimethylallyladenosine synthase (474 aa).

An MTTase N-terminal domain is found at 3-120 (KKLHIKTWGC…LPEMINQVKG (118 aa)). C12, C49, C83, C157, C161, and C164 together coordinate [4Fe-4S] cluster. The region spanning 143 to 375 (RAEGPTAFVS…QERINQQAMA (233 aa)) is the Radical SAM core domain. The TRAM domain occupies 378 to 441 (RRMLGTTQRI…PNSLRGKVIR (64 aa)).

This sequence belongs to the methylthiotransferase family. MiaB subfamily. As to quaternary structure, monomer. It depends on [4Fe-4S] cluster as a cofactor.

The protein resides in the cytoplasm. The catalysed reaction is N(6)-dimethylallyladenosine(37) in tRNA + (sulfur carrier)-SH + AH2 + 2 S-adenosyl-L-methionine = 2-methylsulfanyl-N(6)-dimethylallyladenosine(37) in tRNA + (sulfur carrier)-H + 5'-deoxyadenosine + L-methionine + A + S-adenosyl-L-homocysteine + 2 H(+). Catalyzes the methylthiolation of N6-(dimethylallyl)adenosine (i(6)A), leading to the formation of 2-methylthio-N6-(dimethylallyl)adenosine (ms(2)i(6)A) at position 37 in tRNAs that read codons beginning with uridine. This chain is tRNA-2-methylthio-N(6)-dimethylallyladenosine synthase, found in Cronobacter sakazakii (strain ATCC BAA-894) (Enterobacter sakazakii).